The sequence spans 252 residues: Hydroxyacylglutathione hydrolase (252 aa).

Residues histidine 54, histidine 56, aspartate 58, histidine 59, histidine 111, aspartate 130, and histidine 170 each contribute to the Zn(2+) site.

This sequence belongs to the metallo-beta-lactamase superfamily. Glyoxalase II family. As to quaternary structure, monomer. The cofactor is Zn(2+).

It catalyses the reaction an S-(2-hydroxyacyl)glutathione + H2O = a 2-hydroxy carboxylate + glutathione + H(+). Its pathway is secondary metabolite metabolism; methylglyoxal degradation; (R)-lactate from methylglyoxal: step 2/2. Functionally, thiolesterase that catalyzes the hydrolysis of S-D-lactoyl-glutathione to form glutathione and D-lactic acid. This is Hydroxyacylglutathione hydrolase from Francisella philomiragia subsp. philomiragia (strain ATCC 25017 / CCUG 19701 / FSC 153 / O#319-036).